Reading from the N-terminus, the 109-residue chain is SIAFSRAVFSEFLATLLFVFFGLGSALNWPQALPSVLQIAMAFGLAIGTLVQTLGHISGAHINPAVTVACLVGCHVSFLRATFYLAAQLLGAVAGAALLHELTPPDIRG.

Topologically, residues 1 to 6 (SIAFSR) are cytoplasmic. The helical transmembrane segment at 7–27 (AVFSEFLATLLFVFFGLGSAL) threads the bilayer. Over 28 to 35 (NWPQALPS) the chain is Extracellular. Residues 36–54 (VLQIAMAFGLAIGTLVQTL) traverse the membrane as a helical segment. At 55-59 (GHISG) the chain is on the cytoplasmic side. The segment at residues 60 to 69 (AHINPAVTVA) is an intramembrane region (discontinuously helical). The short motif at 63–65 (NPA) is the NPA 1 element. At 70 to 80 (CLVGCHVSFLR) the chain is on the cytoplasmic side. Residues 81–102 (ATFYLAAQLLGAVAGAALLHEL) traverse the membrane as a helical segment. At 103–109 (TPPDIRG) the chain is on the extracellular side.

Belongs to the MIP/aquaporin (TC 1.A.8) family. As to quaternary structure, homotetramer. Post-translationally, serine phosphorylation is necessary and sufficient for expression at the apical membrane. Endocytosis is not phosphorylation-dependent. N-glycosylated.

It localises to the apical cell membrane. The protein resides in the basolateral cell membrane. It is found in the cell membrane. The protein localises to the cytoplasmic vesicle membrane. Its subcellular location is the golgi apparatus. It localises to the trans-Golgi network membrane. The catalysed reaction is H2O(in) = H2O(out). It carries out the reaction glycerol(in) = glycerol(out). Its function is as follows. Forms a water-specific channel that provides the plasma membranes of renal collecting duct with high permeability to water, thereby permitting water to move in the direction of an osmotic gradient. Plays an essential role in renal water homeostasis. Could also be permeable to glycerol. The chain is Aquaporin-2 from Elephas maximus (Indian elephant).